Here is a 223-residue protein sequence, read N- to C-terminus: ATP synthase subunit a 1 (223 aa).

5 consecutive transmembrane segments (helical) span residues 20 to 40, 78 to 98, 108 to 128, 174 to 194, and 196 to 216; these read LTIA…AFAS, YLPY…CTII, LSTT…FGIA, MILA…MSVL, and LLTG…YISA.

Belongs to the ATPase A chain family. As to quaternary structure, F-type ATPases have 2 components, CF(1) - the catalytic core - and CF(0) - the membrane proton channel. CF(1) has five subunits: alpha(3), beta(3), gamma(1), delta(1), epsilon(1). CF(0) has four main subunits: a, b, b' and c.

It localises to the cell inner membrane. In terms of biological role, key component of the proton channel; it plays a direct role in the translocation of protons across the membrane. The sequence is that of ATP synthase subunit a 1 from Chlorobium luteolum (strain DSM 273 / BCRC 81028 / 2530) (Pelodictyon luteolum).